A 127-amino-acid polypeptide reads, in one-letter code: uncharacterized protein (127 aa).

A coiled-coil region spans residues 71–126 (FYLREYRRIRRRIKELKNRAKYISKGEIAYNPKIMKEVEALKEKLSEIEKKIEELK).

This is an uncharacterized protein from Aquifex aeolicus (strain VF5).